The chain runs to 1387 residues: DNA-directed RNA polymerase subunit beta'' (1387 aa).

Residues Cys-224, Cys-295, Cys-302, and Cys-305 each coordinate Zn(2+).

It belongs to the RNA polymerase beta' chain family. RpoC2 subfamily. In plastids the minimal PEP RNA polymerase catalytic core is composed of four subunits: alpha, beta, beta', and beta''. When a (nuclear-encoded) sigma factor is associated with the core the holoenzyme is formed, which can initiate transcription. Requires Zn(2+) as cofactor.

Its subcellular location is the plastid. It localises to the chloroplast. It catalyses the reaction RNA(n) + a ribonucleoside 5'-triphosphate = RNA(n+1) + diphosphate. Functionally, DNA-dependent RNA polymerase catalyzes the transcription of DNA into RNA using the four ribonucleoside triphosphates as substrates. The polypeptide is DNA-directed RNA polymerase subunit beta'' (Panax ginseng (Korean ginseng)).